Consider the following 277-residue polypeptide: Antigen 1 (277 aa).

Residues 1 to 16 (MQLLALTLALCASIAA) form the signal peptide. N-linked (GlcNAc...) asparagine glycosylation is found at Asn41, Asn71, Asn127, and Asn200. A disordered region spans residues 230-277 (CVGGEEENDGQGEEQTEEPAQDDQQDEAAEEEIPENCHTHEGGELHCT). Positions 233–263 (GEEENDGQGEEQTEEPAQDDQQDEAAEEEIP) are enriched in acidic residues. Residues 264 to 277 (ENCHTHEGGELHCT) are compositionally biased toward basic and acidic residues.

Belongs to the ZPS1 family.

The protein is Antigen 1 (aspnd1) of Emericella nidulans (strain FGSC A4 / ATCC 38163 / CBS 112.46 / NRRL 194 / M139) (Aspergillus nidulans).